We begin with the raw amino-acid sequence, 269 residues long: 3'(2'),5'-bisphosphate nucleotidase CysQ (269 aa).

Mg(2+) contacts are provided by E69, D89, L91, D92, and D216. E69 contributes to the substrate binding site. Substrate-binding positions include L91–T94 and D216.

This sequence belongs to the inositol monophosphatase superfamily. CysQ family. Requires Mg(2+) as cofactor.

It localises to the cell inner membrane. The enzyme catalyses adenosine 3',5'-bisphosphate + H2O = AMP + phosphate. Converts adenosine-3',5'-bisphosphate (PAP) to AMP. This chain is 3'(2'),5'-bisphosphate nucleotidase CysQ, found in Haemophilus influenzae (strain ATCC 51907 / DSM 11121 / KW20 / Rd).